The chain runs to 69 residues: Large ribosomal subunit protein uL29 (69 aa).

This sequence belongs to the universal ribosomal protein uL29 family.

This is Large ribosomal subunit protein uL29 from Parasynechococcus marenigrum (strain WH8102).